The primary structure comprises 725 residues: Dipeptidyl-peptidase 5 (725 aa).

Residues 1–18 form the signal peptide; that stretch reads MGALRWLSIAATASTALA. 6 N-linked (GlcNAc...) asparagine glycosylation sites follow: N75, N96, N153, N258, N383, and N453. The active-site Charge relay system is S563. N-linked (GlcNAc...) asparagine glycosylation is present at N610. Residues D646 and H678 each act as charge relay system in the active site.

It belongs to the peptidase S9C family.

Its subcellular location is the secreted. This Aspergillus oryzae (strain ATCC 42149 / RIB 40) (Yellow koji mold) protein is Dipeptidyl-peptidase 5.